The sequence spans 343 residues: uncharacterized protein (343 aa).

The interval 66–89 (TQNPEPTSASTPPSASASSLPNGA) is disordered. The span at 71-84 (PTSASTPPSASASS) shows a compositional bias: low complexity. A helical transmembrane segment spans residues 96 to 116 (GVIAGPIVGVLGGLIVLVIIF). 2 disordered regions span residues 161–191 (GGYQMHSTPWASSPRNSTIPQRSQSFYNDTR) and 252–343 (GRPL…SEHF). Polar residues predominate over residues 165–188 (MHSTPWASSPRNSTIPQRSQSFYN). The span at 280-289 (SNDDSDETKL) shows a compositional bias: basic and acidic residues. The span at 290-299 (KQSSTESSSE) shows a compositional bias: low complexity. Basic and acidic residues-rich tracts occupy residues 301–311 (LDEKDKFDKNS) and 322–333 (SSYEHEISEEHK). Basic residues predominate over residues 334 to 343 (KHSKKRSEHF).

Its subcellular location is the golgi apparatus membrane. This is an uncharacterized protein from Schizosaccharomyces pombe (strain 972 / ATCC 24843) (Fission yeast).